A 226-amino-acid polypeptide reads, in one-letter code: Ribonuclease 3 (226 aa).

The 123-residue stretch at 6 to 128 (INRLQRKLGY…LIGGVFLDSN (123 aa)) folds into the RNase III domain. Glu41 is a binding site for Mg(2+). Residue Asp45 is part of the active site. Mg(2+) contacts are provided by Asp114 and Glu117. Glu117 is a catalytic residue. Residues 155–225 (DPKTRLQEYL…AEQVLKKLEL (71 aa)) form the DRBM domain.

Belongs to the ribonuclease III family. In terms of assembly, homodimer. The cofactor is Mg(2+).

Its subcellular location is the cytoplasm. The enzyme catalyses Endonucleolytic cleavage to 5'-phosphomonoester.. Functionally, digests double-stranded RNA. Involved in the processing of primary rRNA transcript to yield the immediate precursors to the large and small rRNAs (23S and 16S). Processes some mRNAs, and tRNAs when they are encoded in the rRNA operon. Processes pre-crRNA and tracrRNA of type II CRISPR loci if present in the organism. The protein is Ribonuclease 3 of Salmonella choleraesuis (strain SC-B67).